The following is a 312-amino-acid chain: 26S proteasome non-ATPase regulatory subunit 14 (312 aa).

One can recognise an MPN domain in the interval 33-168 (VYISSLALLK…IDAFRTINPQ (136 aa)). 3 residues coordinate Zn(2+): His115, His117, and Asp128. The short motif at 115–128 (HSHPGFGCWLSGVD) is the JAMM motif element.

The protein belongs to the peptidase M67A family. PSMD14 subfamily. Component of the 19S regulatory cap of the 26S proteasome.

Its function is as follows. Metalloprotease component of the 26S proteasome that specifically cleaves 'Lys-63'-linked polyubiquitin chains. The 26S proteasome is involved in the ATP-dependent degradation of ubiquitinated proteins. The function of the 'Lys-63'-specific deubiquitination of the proteasome is unclear. This Caenorhabditis elegans protein is 26S proteasome non-ATPase regulatory subunit 14 (rpn-11).